The primary structure comprises 210 residues: Na(+)-translocating NADH-quinone reductase subunit D (210 aa).

The next 6 helical transmembrane spans lie at 9–29 (AVLF…LGIC), 42–62 (LIMS…ISTI), 72–92 (IIVQ…VLQA), 96–116 (ATAK…IVMG), 131–151 (FLDG…VGFI), and 178–198 (MGLL…IWVL).

It belongs to the NqrDE/RnfAE family. In terms of assembly, composed of six subunits; NqrA, NqrB, NqrC, NqrD, NqrE and NqrF.

It localises to the cell inner membrane. It carries out the reaction a ubiquinone + n Na(+)(in) + NADH + H(+) = a ubiquinol + n Na(+)(out) + NAD(+). Functionally, NQR complex catalyzes the reduction of ubiquinone-1 to ubiquinol by two successive reactions, coupled with the transport of Na(+) ions from the cytoplasm to the periplasm. NqrA to NqrE are probably involved in the second step, the conversion of ubisemiquinone to ubiquinol. The sequence is that of Na(+)-translocating NADH-quinone reductase subunit D from Pseudoalteromonas translucida (strain TAC 125).